The primary structure comprises 545 residues: Chaperonin GroEL (545 aa).

Residues 30-33 (TLGP), lysine 51, 87-91 (DGTTT), glycine 415, 479-481 (NAA), and aspartate 495 each bind ATP.

Belongs to the chaperonin (HSP60) family. In terms of assembly, forms a cylinder of 14 subunits composed of two heptameric rings stacked back-to-back. Interacts with the co-chaperonin GroES.

It is found in the cytoplasm. It carries out the reaction ATP + H2O + a folded polypeptide = ADP + phosphate + an unfolded polypeptide.. Functionally, together with its co-chaperonin GroES, plays an essential role in assisting protein folding. The GroEL-GroES system forms a nano-cage that allows encapsulation of the non-native substrate proteins and provides a physical environment optimized to promote and accelerate protein folding. This is Chaperonin GroEL from Tolumonas auensis (strain DSM 9187 / NBRC 110442 / TA 4).